The sequence spans 66 residues: Large ribosomal subunit protein bL33c (66 aa).

The protein belongs to the bacterial ribosomal protein bL33 family.

It localises to the plastid. Its subcellular location is the chloroplast. This chain is Large ribosomal subunit protein bL33c, found in Crucihimalaya wallichii (Rock-cress).